A 165-amino-acid polypeptide reads, in one-letter code: Cyclic pyranopterin monophosphate synthase (165 aa).

Substrate contacts are provided by residues 76 to 78 and 119 to 120; these read LCH and ME. Aspartate 134 is an active-site residue.

Belongs to the MoaC family. In terms of assembly, homohexamer; trimer of dimers.

The enzyme catalyses (8S)-3',8-cyclo-7,8-dihydroguanosine 5'-triphosphate = cyclic pyranopterin phosphate + diphosphate. It participates in cofactor biosynthesis; molybdopterin biosynthesis. Catalyzes the conversion of (8S)-3',8-cyclo-7,8-dihydroguanosine 5'-triphosphate to cyclic pyranopterin monophosphate (cPMP). The sequence is that of Cyclic pyranopterin monophosphate synthase from Photobacterium profundum (strain SS9).